The sequence spans 420 residues: Glucose-1-phosphate adenylyltransferase (420 aa).

Alpha-D-glucose 1-phosphate contacts are provided by residues Y107, G173, 188–189, and S206; that span reads EK.

It belongs to the bacterial/plant glucose-1-phosphate adenylyltransferase family. In terms of assembly, homotetramer.

It carries out the reaction alpha-D-glucose 1-phosphate + ATP + H(+) = ADP-alpha-D-glucose + diphosphate. The protein operates within glycan biosynthesis; glycogen biosynthesis. In terms of biological role, involved in the biosynthesis of ADP-glucose, a building block required for the elongation reactions to produce glycogen. Catalyzes the reaction between ATP and alpha-D-glucose 1-phosphate (G1P) to produce pyrophosphate and ADP-Glc. The sequence is that of Glucose-1-phosphate adenylyltransferase from Shewanella oneidensis (strain ATCC 700550 / JCM 31522 / CIP 106686 / LMG 19005 / NCIMB 14063 / MR-1).